Here is a 61-residue protein sequence, read N- to C-terminus: Large ribosomal subunit protein bL32 (61 aa).

The interval 1–44 (MAVQQNRKSRSRRDMRRSHDALTENALTVDQATGETHRRHHVTK) is disordered. Residues 7–16 (RKSRSRRDMR) show a composition bias toward basic residues. A compositionally biased stretch (polar residues) spans 25–34 (NALTVDQATG).

Belongs to the bacterial ribosomal protein bL32 family.

The chain is Large ribosomal subunit protein bL32 from Acinetobacter baumannii (strain AB307-0294).